Here is a 205-residue protein sequence, read N- to C-terminus: Protein GrpE (205 aa).

The span at 1–18 (MSEEVKNSVETEENKASK) shows a compositional bias: basic and acidic residues. Positions 1 to 60 (MSEEVKNSVETEENKASKDNATQAPNPTENHNTAQETEKAENSEKTESATQENESLDKLK) are disordered. Residues 19 to 35 (DNATQAPNPTENHNTAQ) are compositionally biased toward polar residues. Residues 36-47 (ETEKAENSEKTE) are compositionally biased toward basic and acidic residues.

This sequence belongs to the GrpE family. As to quaternary structure, homodimer.

It is found in the cytoplasm. Participates actively in the response to hyperosmotic and heat shock by preventing the aggregation of stress-denatured proteins, in association with DnaK and GrpE. It is the nucleotide exchange factor for DnaK and may function as a thermosensor. Unfolded proteins bind initially to DnaJ; upon interaction with the DnaJ-bound protein, DnaK hydrolyzes its bound ATP, resulting in the formation of a stable complex. GrpE releases ADP from DnaK; ATP binding to DnaK triggers the release of the substrate protein, thus completing the reaction cycle. Several rounds of ATP-dependent interactions between DnaJ, DnaK and GrpE are required for fully efficient folding. The sequence is that of Protein GrpE from Chloroherpeton thalassium (strain ATCC 35110 / GB-78).